Consider the following 427-residue polypeptide: V-type proton ATPase subunit C 2 (427 aa).

The disordered stretch occupies residues 292–319 (HKVKVTPLGNPDRPAAGQTDRERESEGE).

It belongs to the V-ATPase C subunit family. In terms of assembly, V-ATPase is a heteromultimeric enzyme made up of two complexes: the ATP-hydrolytic V1 complex and the proton translocation V0 complex. The V1 complex consists of three catalytic AB heterodimers that form a heterohexamer, three peripheral stalks each consisting of EG heterodimers, one central rotor including subunits D and F, and the regulatory subunits C and H. The proton translocation complex V0 consists of the proton transport subunit a, a ring of proteolipid subunits c9c'', rotary subunit d, subunits e and f, and the accessory subunits ATP6AP1/Ac45 and ATP6AP2/PRR. Kidney and placenta.

In terms of biological role, subunit of the V1 complex of vacuolar(H+)-ATPase (V-ATPase), a multisubunit enzyme composed of a peripheral complex (V1) that hydrolyzes ATP and a membrane integral complex (V0) that translocates protons. V-ATPase is responsible for acidifying and maintaining the pH of intracellular compartments and in some cell types, is targeted to the plasma membrane, where it is responsible for acidifying the extracellular environment. Subunit C is necessary for the assembly of the catalytic sector of the enzyme and is likely to have a specific function in its catalytic activity. The sequence is that of V-type proton ATPase subunit C 2 (ATP6V1C2) from Homo sapiens (Human).